A 533-amino-acid chain; its full sequence is Probable bifunctional tRNA threonylcarbamoyladenosine biosynthesis protein (533 aa).

Residues 1-328 (MRILGIEGTA…FRPDAVTVTW (328 aa)) are kae1. His112 and His116 together coordinate Fe cation. L-threonylcarbamoyladenylate is bound by residues 133 to 137 (NASGA), Asp165, Gly178, Glu182, and Asn261. Asp289 contacts Fe cation. The 195-residue stretch at 339–533 (PATLDKTPVR…RDIESRGRYH (195 aa)) folds into the Protein kinase domain. ATP-binding positions include 347–354 (VRGAEAIV) and Lys363. The Proton acceptor; for kinase activity role is filled by Asp452.

In the N-terminal section; belongs to the KAE1 / TsaD family. The protein in the C-terminal section; belongs to the protein kinase superfamily. Tyr protein kinase family. BUD32 subfamily. Component of the KEOPS complex that consists of Kae1, Bud32, Cgi121 and Pcc1; the whole complex dimerizes. Fe(2+) is required as a cofactor.

It localises to the cytoplasm. It carries out the reaction L-seryl-[protein] + ATP = O-phospho-L-seryl-[protein] + ADP + H(+). It catalyses the reaction L-threonyl-[protein] + ATP = O-phospho-L-threonyl-[protein] + ADP + H(+). The enzyme catalyses L-threonylcarbamoyladenylate + adenosine(37) in tRNA = N(6)-L-threonylcarbamoyladenosine(37) in tRNA + AMP + H(+). Functionally, required for the formation of a threonylcarbamoyl group on adenosine at position 37 (t(6)A37) in tRNAs that read codons beginning with adenine. Is a component of the KEOPS complex that is probably involved in the transfer of the threonylcarbamoyl moiety of threonylcarbamoyl-AMP (TC-AMP) to the N6 group of A37. The Kae1 domain likely plays a direct catalytic role in this reaction. The Bud32 domain probably displays kinase activity that regulates Kae1 function. The chain is Probable bifunctional tRNA threonylcarbamoyladenosine biosynthesis protein from Haloquadratum walsbyi (strain DSM 16790 / HBSQ001).